Reading from the N-terminus, the 333-residue chain is MTIVVTGAAGFIGSNLVKGLNQRGITDIIAVDNLSNGDKFHNLVDCEISHYLDKHEFLHLLLDGEYEGELSAILHQGACSDTMNHDGKYMMDNNYQYTLALFDYCQHEEIQFLYASSAATYGKGTVFKEERQHEGPLNVYGYSKFLFDQVLRQRIKEGLSAQAVGFRYFNVYGPREQHKGRMASVAFHHFNQYREHGKVKLFGGWDGWENGMQSRDFVSVEDVVKVNLFFLDNPGKSGIYNLGSGRSQPFNDVAEATVNACRRHEGKPALTLAEMIQQGIVEYIDFPDALKGKYQSFTQADIAKLREAGYAEAMLSVAEGVDRYVDWLIGRQG.

Residues 11-12 (FI), 32-33 (DN), lysine 39, lysine 54, 76-80 (QGACS), and asparagine 93 contribute to the NADP(+) site. Tyrosine 140 serves as the catalytic Proton acceptor. Position 144 (lysine 144) interacts with NADP(+). Residue asparagine 170 coordinates substrate. Positions 171 and 179 each coordinate NADP(+). Lysine 179 serves as the catalytic Proton acceptor. Residues arginine 181, histidine 188, 202–205 (FGGW), arginine 215, and tyrosine 294 each bind substrate.

Belongs to the NAD(P)-dependent epimerase/dehydratase family. HldD subfamily. In terms of assembly, homopentamer. The cofactor is NADP(+).

It carries out the reaction ADP-D-glycero-beta-D-manno-heptose = ADP-L-glycero-beta-D-manno-heptose. It participates in nucleotide-sugar biosynthesis; ADP-L-glycero-beta-D-manno-heptose biosynthesis; ADP-L-glycero-beta-D-manno-heptose from D-glycero-beta-D-manno-heptose 7-phosphate: step 4/4. It functions in the pathway bacterial outer membrane biogenesis; LPS core biosynthesis. Its function is as follows. Catalyzes the interconversion between ADP-D-glycero-beta-D-manno-heptose and ADP-L-glycero-beta-D-manno-heptose via an epimerization at carbon 6 of the heptose. The chain is ADP-L-glycero-D-manno-heptose-6-epimerase from Chromobacterium violaceum (strain ATCC 12472 / DSM 30191 / JCM 1249 / CCUG 213 / NBRC 12614 / NCIMB 9131 / NCTC 9757 / MK).